The sequence spans 553 residues: Nucleoside-diphosphatase mig-23 (553 aa).

Topologically, residues 1–8 are cytoplasmic; sequence MRVSRRFT. Residues 9 to 29 form a helical membrane-spanning segment; that stretch reads ILAITAMIFLSLIICIYAVAA. Over 30–489 the chain is Lumenal; it reads HTTVNVILQK…IVKETHSASE (460 aa). The active-site Proton acceptor is the Glu-174. Residues Asn-190 and Asn-284 are each glycosylated (N-linked (GlcNAc...) asparagine). Residues 490-510 traverse the membrane as a helical segment; that stretch reads SLWAPLFFLSAVFCLFVLVCA. Residues 511–553 lie on the Cytoplasmic side of the membrane; sequence KEHSLLCFDDKRRASFGLTRRQYSYKMLKEDRTSSSAFLENFA.

It belongs to the GDA1/CD39 NTPase family.

It localises to the golgi apparatus membrane. It catalyses the reaction a ribonucleoside 5'-diphosphate + H2O = a ribonucleoside 5'-phosphate + phosphate + H(+). In terms of biological role, seems to be able to hydrolyze ADP, UDP and GDP. Supports mig-17 glycosylation and surface expression, which is required for proper migration of distal tip cells during gonad morphogenesis. This is Nucleoside-diphosphatase mig-23 from Caenorhabditis briggsae.